The sequence spans 279 residues: MNAPARPVRSQYEDFMRHVYTHGVAKGDRTGTGTRSVFGYQMRFDLNEGFPLVTTKKVHLKSIITELLWFLTGSSSNHWLKERGVTIWDEWAREDGDLGPVYGVQWRSWPTPDGGHIDQISQVVETLRTHPDSRRIIVSAWNVADLDKMALMPCHAFFQFYVAPPQAAGERGKLSCQLYQRSADIFLGVPFNIASYALLTHMMAQQCNLEVGDFIWTGGDCHIYSNHFEQVELQLSRAPHPYPTLHILRRPDSLFDYRFEDFEVRDYAHHPAIKAPVAV.

Arg29 serves as a coordination point for dUMP. His59 provides a ligand contact to (6R)-5,10-methylene-5,6,7,8-tetrahydrofolate. 134 to 135 (RR) lines the dUMP pocket. The active-site Nucleophile is the Cys154. DUMP-binding positions include 181-184 (RSAD), Asn192, and 222-224 (HIY). Asp184 lines the (6R)-5,10-methylene-5,6,7,8-tetrahydrofolate pocket. (6R)-5,10-methylene-5,6,7,8-tetrahydrofolate is bound at residue Ala278.

This sequence belongs to the thymidylate synthase family. Bacterial-type ThyA subfamily. Homodimer.

The protein localises to the cytoplasm. It carries out the reaction dUMP + (6R)-5,10-methylene-5,6,7,8-tetrahydrofolate = 7,8-dihydrofolate + dTMP. Its pathway is pyrimidine metabolism; dTTP biosynthesis. Its function is as follows. Catalyzes the reductive methylation of 2'-deoxyuridine-5'-monophosphate (dUMP) to 2'-deoxythymidine-5'-monophosphate (dTMP) while utilizing 5,10-methylenetetrahydrofolate (mTHF) as the methyl donor and reductant in the reaction, yielding dihydrofolate (DHF) as a by-product. This enzymatic reaction provides an intracellular de novo source of dTMP, an essential precursor for DNA biosynthesis. The chain is Thymidylate synthase from Paracidovorax citrulli (strain AAC00-1) (Acidovorax citrulli).